A 911-amino-acid polypeptide reads, in one-letter code: Isoleucine--tRNA ligase (911 aa).

Residues Pro-57–His-67 carry the 'HIGH' region motif. Glu-551 is an L-isoleucyl-5'-AMP binding site. Residues Lys-592–Ser-596 carry the 'KMSKS' region motif. Lys-595 contributes to the ATP binding site. The Zn(2+) site is built by Cys-881, Cys-884, Cys-901, and Cys-904.

The protein belongs to the class-I aminoacyl-tRNA synthetase family. IleS type 1 subfamily. In terms of assembly, monomer. The cofactor is Zn(2+).

It is found in the cytoplasm. The enzyme catalyses tRNA(Ile) + L-isoleucine + ATP = L-isoleucyl-tRNA(Ile) + AMP + diphosphate. In terms of biological role, catalyzes the attachment of isoleucine to tRNA(Ile). As IleRS can inadvertently accommodate and process structurally similar amino acids such as valine, to avoid such errors it has two additional distinct tRNA(Ile)-dependent editing activities. One activity is designated as 'pretransfer' editing and involves the hydrolysis of activated Val-AMP. The other activity is designated 'posttransfer' editing and involves deacylation of mischarged Val-tRNA(Ile). The chain is Isoleucine--tRNA ligase from Exiguobacterium sibiricum (strain DSM 17290 / CCUG 55495 / CIP 109462 / JCM 13490 / 255-15).